Here is a 178-residue protein sequence, read N- to C-terminus: Interleukin-10 (178 aa).

Residues 1 to 18 form the signal peptide; that stretch reads MHSSALLCCLVLLTGVRA. 2 disulfides stabilise this stretch: cysteine 30-cysteine 126 and cysteine 80-cysteine 132. Asparagine 134 carries N-linked (GlcNAc...) asparagine glycosylation.

It belongs to the IL-10 family. Homodimer. Interacts with IL10RA and IL10RB.

It is found in the secreted. Major immune regulatory cytokine that acts on many cells of the immune system where it has profound anti-inflammatory functions, limiting excessive tissue disruption caused by inflammation. Mechanistically, IL10 binds to its heterotetrameric receptor comprising IL10RA and IL10RB leading to JAK1 and STAT2-mediated phosphorylation of STAT3. In turn, STAT3 translocates to the nucleus where it drives expression of anti-inflammatory mediators. Targets antigen-presenting cells (APCs) such as macrophages and monocytes and inhibits their release of pro-inflammatory cytokines including granulocyte-macrophage colony-stimulating factor /GM-CSF, granulocyte colony-stimulating factor/G-CSF, IL-1 alpha, IL-1 beta, IL-6, IL-8 and TNF-alpha. Also interferes with antigen presentation by reducing the expression of MHC-class II and co-stimulatory molecules, thereby inhibiting their ability to induce T cell activation. In addition, controls the inflammatory response of macrophages by reprogramming essential metabolic pathways including mTOR signaling. The sequence is that of Interleukin-10 (IL10) from Pan troglodytes (Chimpanzee).